The primary structure comprises 415 residues: Lipoyl synthase, mitochondrial (415 aa).

The transit peptide at Met-1–Tyr-32 directs the protein to the mitochondrion. Residues Gly-22–Tyr-32 are compositionally biased toward polar residues. Residues Gly-22–Asn-53 form a disordered region. Positions Ala-33–Thr-47 are enriched in low complexity. Positions 132, 137, 143, 163, 167, 170, and 378 each coordinate [4Fe-4S] cluster. Residues Gly-146–Leu-367 form the Radical SAM core domain. The disordered stretch occupies residues Ala-395 to Arg-415.

The protein belongs to the radical SAM superfamily. Lipoyl synthase family. It depends on [4Fe-4S] cluster as a cofactor.

It is found in the mitochondrion. The enzyme catalyses [[Fe-S] cluster scaffold protein carrying a second [4Fe-4S](2+) cluster] + N(6)-octanoyl-L-lysyl-[protein] + 2 oxidized [2Fe-2S]-[ferredoxin] + 2 S-adenosyl-L-methionine + 4 H(+) = [[Fe-S] cluster scaffold protein] + N(6)-[(R)-dihydrolipoyl]-L-lysyl-[protein] + 4 Fe(3+) + 2 hydrogen sulfide + 2 5'-deoxyadenosine + 2 L-methionine + 2 reduced [2Fe-2S]-[ferredoxin]. It functions in the pathway protein modification; protein lipoylation via endogenous pathway; protein N(6)-(lipoyl)lysine from octanoyl-[acyl-carrier-protein]: step 2/2. Its function is as follows. Catalyzes the radical-mediated insertion of two sulfur atoms into the C-6 and C-8 positions of the octanoyl moiety bound to the lipoyl domains of lipoate-dependent enzymes, thereby converting the octanoylated domains into lipoylated derivatives. The chain is Lipoyl synthase, mitochondrial from Aspergillus oryzae (strain ATCC 42149 / RIB 40) (Yellow koji mold).